The sequence spans 556 residues: Dihydroxy-acid dehydratase (556 aa).

Cys-47 lines the [2Fe-2S] cluster pocket. Position 79 (Asp-79) interacts with Mg(2+). Cys-120 lines the [2Fe-2S] cluster pocket. Residues Asp-121 and Lys-122 each contribute to the Mg(2+) site. Lys-122 carries the post-translational modification N6-carboxylysine. Cys-192 provides a ligand contact to [2Fe-2S] cluster. Glu-444 contributes to the Mg(2+) binding site. The Proton acceptor role is filled by Ser-470.

The protein belongs to the IlvD/Edd family. In terms of assembly, homodimer. It depends on [2Fe-2S] cluster as a cofactor. Requires Mg(2+) as cofactor.

It catalyses the reaction (2R)-2,3-dihydroxy-3-methylbutanoate = 3-methyl-2-oxobutanoate + H2O. It carries out the reaction (2R,3R)-2,3-dihydroxy-3-methylpentanoate = (S)-3-methyl-2-oxopentanoate + H2O. It functions in the pathway amino-acid biosynthesis; L-isoleucine biosynthesis; L-isoleucine from 2-oxobutanoate: step 3/4. Its pathway is amino-acid biosynthesis; L-valine biosynthesis; L-valine from pyruvate: step 3/4. Functions in the biosynthesis of branched-chain amino acids. Catalyzes the dehydration of (2R,3R)-2,3-dihydroxy-3-methylpentanoate (2,3-dihydroxy-3-methylvalerate) into 2-oxo-3-methylpentanoate (2-oxo-3-methylvalerate) and of (2R)-2,3-dihydroxy-3-methylbutanoate (2,3-dihydroxyisovalerate) into 2-oxo-3-methylbutanoate (2-oxoisovalerate), the penultimate precursor to L-isoleucine and L-valine, respectively. The chain is Dihydroxy-acid dehydratase from Prochlorococcus marinus (strain MIT 9303).